The primary structure comprises 234 residues: Sugar fermentation stimulation protein homolog (234 aa).

The protein belongs to the SfsA family.

This chain is Sugar fermentation stimulation protein homolog, found in Shewanella sp. (strain MR-4).